We begin with the raw amino-acid sequence, 256 residues long: Deoxyribose-phosphate aldolase (256 aa).

The active-site Proton donor/acceptor is aspartate 102. Lysine 165 functions as the Schiff-base intermediate with acetaldehyde in the catalytic mechanism. The Proton donor/acceptor role is filled by lysine 197.

Belongs to the DeoC/FbaB aldolase family. DeoC type 2 subfamily.

The protein resides in the cytoplasm. It carries out the reaction 2-deoxy-D-ribose 5-phosphate = D-glyceraldehyde 3-phosphate + acetaldehyde. The protein operates within carbohydrate degradation; 2-deoxy-D-ribose 1-phosphate degradation; D-glyceraldehyde 3-phosphate and acetaldehyde from 2-deoxy-alpha-D-ribose 1-phosphate: step 2/2. Its function is as follows. Catalyzes a reversible aldol reaction between acetaldehyde and D-glyceraldehyde 3-phosphate to generate 2-deoxy-D-ribose 5-phosphate. The chain is Deoxyribose-phosphate aldolase from Shewanella sp. (strain W3-18-1).